Reading from the N-terminus, the 637-residue chain is Threonine--tRNA ligase (637 aa).

One can recognise a TGS domain in the interval 1 to 61 (MLNITLPDGS…VEDSAVQIIT (61 aa)). A catalytic region spans residues 242–533 (DHRKLGKQLD…LIENHAGSFP (292 aa)). Residues cysteine 333, histidine 384, and histidine 510 each coordinate Zn(2+).

It belongs to the class-II aminoacyl-tRNA synthetase family. In terms of assembly, homodimer. Requires Zn(2+) as cofactor.

The protein localises to the cytoplasm. The enzyme catalyses tRNA(Thr) + L-threonine + ATP = L-threonyl-tRNA(Thr) + AMP + diphosphate + H(+). Catalyzes the attachment of threonine to tRNA(Thr) in a two-step reaction: L-threonine is first activated by ATP to form Thr-AMP and then transferred to the acceptor end of tRNA(Thr). Also edits incorrectly charged L-seryl-tRNA(Thr). The protein is Threonine--tRNA ligase of Neisseria meningitidis serogroup A / serotype 4A (strain DSM 15465 / Z2491).